Consider the following 263-residue polypeptide: uncharacterized protein (263 aa).

Residue 17–41 (GGGRGLGAAIALAFAQAGADVLIAS) participates in NAD(+) binding. Ser-147 is a binding site for substrate. Tyr-160 acts as the Proton acceptor in catalysis. Lys-164 lines the NAD(+) pocket.

This sequence belongs to the short-chain dehydrogenases/reductases (SDR) family.

This is an uncharacterized protein from Mycobacterium tuberculosis (strain CDC 1551 / Oshkosh).